A 245-amino-acid chain; its full sequence is Tetraspanin-16 (245 aa).

The Cytoplasmic segment spans residues 1–13 (MAEIHTPYSSLKK). The chain crosses the membrane as a helical span at residues 14-34 (LLSLLNGFVAVSGIILVGLGI). The Extracellular portion of the chain corresponds to 35–37 (GGK). Residues 38–58 (CGGASLTNVLGLSSAYLLHVG) traverse the membrane as a helical segment. Position 59 (N59) is a topological domain, cytoplasmic. The helical transmembrane segment at 60-80 (LCLVMGCITVLLGCAGWYGAT) threads the bilayer. The Extracellular segment spans residues 81–94 (KESRGTLLFCILSM). A helical transmembrane segment spans residues 95-115 (VIVLIMEVTAATVVLLFFPIV). Residues 116–245 (GDVALEHTFV…VAQAGLELLA (130 aa)) are Cytoplasmic-facing.

It belongs to the tetraspanin (TM4SF) family. Broadly expressed in most human tissues and cell lines including neural and bone marrow derived tissues.

Its subcellular location is the membrane. The chain is Tetraspanin-16 (TSPAN16) from Homo sapiens (Human).